The primary structure comprises 422 residues: Pre-B-cell leukemia transcription factor 2 (422 aa).

A disordered region spans residues 1-43 (MDEQGRLMQARGVGIPGHPIHGGPQTLTPHPMHEPPADNGEPR). A compositionally biased stretch (basic and acidic residues) spans 31–43 (PMHEPPADNGEPR). The PBC domain occupies 42-236 (PRKQDIGDIL…VMILRSRFLD (195 aa)). The interval 49–128 (DILQQIMTIT…EGVAGPEKGG (80 aa)) is PBC-A. A PBC-B region spans residues 131–236 (AAAAAAAAAS…VMILRSRFLD (106 aa)). Positions 237–299 (ARRKRRNFSK…NKRIRYKKNI (63 aa)) form a DNA-binding region, homeobox. Disordered stretches follow at residues 319 to 341 (QGGH…GSFN) and 353 to 422 (QGLN…DTSN). A compositionally biased stretch (polar residues) spans 401 to 410 (VTPSSVTSPT).

Belongs to the TALE/PBX homeobox family.

It is found in the nucleus. Functionally, transcriptional activator that binds the sequence 5'-ATCAATCAA-3'. The chain is Pre-B-cell leukemia transcription factor 2 from Xenopus tropicalis (Western clawed frog).